A 92-amino-acid polypeptide reads, in one-letter code: Small ribosomal subunit protein uS19 (92 aa).

The protein belongs to the universal ribosomal protein uS19 family.

Protein S19 forms a complex with S13 that binds strongly to the 16S ribosomal RNA. The sequence is that of Small ribosomal subunit protein uS19 from Oceanobacillus iheyensis (strain DSM 14371 / CIP 107618 / JCM 11309 / KCTC 3954 / HTE831).